The sequence spans 425 residues: UDP-N-acetylglucosamine 1-carboxyvinyltransferase (425 aa).

22–23 (KN) lines the phosphoenolpyruvate pocket. Position 98 (arginine 98) interacts with UDP-N-acetyl-alpha-D-glucosamine. Catalysis depends on cysteine 122, which acts as the Proton donor. The residue at position 122 (cysteine 122) is a 2-(S-cysteinyl)pyruvic acid O-phosphothioketal. Residues 127–131 (RPVDQ), aspartate 313, and isoleucine 335 each bind UDP-N-acetyl-alpha-D-glucosamine.

Belongs to the EPSP synthase family. MurA subfamily.

The protein localises to the cytoplasm. The enzyme catalyses phosphoenolpyruvate + UDP-N-acetyl-alpha-D-glucosamine = UDP-N-acetyl-3-O-(1-carboxyvinyl)-alpha-D-glucosamine + phosphate. Its pathway is cell wall biogenesis; peptidoglycan biosynthesis. In terms of biological role, cell wall formation. Adds enolpyruvyl to UDP-N-acetylglucosamine. The chain is UDP-N-acetylglucosamine 1-carboxyvinyltransferase from Xylella fastidiosa (strain 9a5c).